The primary structure comprises 63 residues: MWGQGVRRFTTSVVRRSHYEEGPGKNLPFSVENKWRLLAMMTLYLGSGFAAPFFIVRHQLLKK.

A mitochondrion-targeting transit peptide spans Met-1–Arg-16. The Mitochondrial matrix segment spans residues Ser-17 to Asn-33. Lys-25 is modified (N6-acetyllysine; alternate). The residue at position 25 (Lys-25) is an N6-succinyllysine; alternate. Residues Lys-34–Leu-60 traverse the membrane as a helical segment. Residues Leu-61–Lys-63 lie on the Mitochondrial intermembrane side of the membrane.

It belongs to the cytochrome c oxidase VIIc family. As to quaternary structure, component of the cytochrome c oxidase (complex IV, CIV), a multisubunit enzyme composed of 14 subunits. The complex is composed of a catalytic core of 3 subunits MT-CO1, MT-CO2 and MT-CO3, encoded in the mitochondrial DNA, and 11 supernumerary subunits COX4I, COX5A, COX5B, COX6A, COX6B, COX6C, COX7A, COX7B, COX7C, COX8 and NDUFA4, which are encoded in the nuclear genome. The complex exists as a monomer or a dimer and forms supercomplexes (SCs) in the inner mitochondrial membrane with NADH-ubiquinone oxidoreductase (complex I, CI) and ubiquinol-cytochrome c oxidoreductase (cytochrome b-c1 complex, complex III, CIII), resulting in different assemblies (supercomplex SCI(1)III(2)IV(1) and megacomplex MCI(2)III(2)IV(2)). Interacts with RAB5IF.

It localises to the mitochondrion inner membrane. It functions in the pathway energy metabolism; oxidative phosphorylation. Functionally, component of the cytochrome c oxidase, the last enzyme in the mitochondrial electron transport chain which drives oxidative phosphorylation. The respiratory chain contains 3 multisubunit complexes succinate dehydrogenase (complex II, CII), ubiquinol-cytochrome c oxidoreductase (cytochrome b-c1 complex, complex III, CIII) and cytochrome c oxidase (complex IV, CIV), that cooperate to transfer electrons derived from NADH and succinate to molecular oxygen, creating an electrochemical gradient over the inner membrane that drives transmembrane transport and the ATP synthase. Cytochrome c oxidase is the component of the respiratory chain that catalyzes the reduction of oxygen to water. Electrons originating from reduced cytochrome c in the intermembrane space (IMS) are transferred via the dinuclear copper A center (CU(A)) of subunit 2 and heme A of subunit 1 to the active site in subunit 1, a binuclear center (BNC) formed by heme A3 and copper B (CU(B)). The BNC reduces molecular oxygen to 2 water molecules using 4 electrons from cytochrome c in the IMS and 4 protons from the mitochondrial matrix. This chain is Cytochrome c oxidase subunit 7C, mitochondrial (COX7C), found in Carlito syrichta (Philippine tarsier).